A 249-amino-acid polypeptide reads, in one-letter code: 5'-nucleotidase SurE (249 aa).

4 residues coordinate a divalent metal cation: Asp8, Asp9, Ser39, and Asn91.

It belongs to the SurE nucleotidase family. It depends on a divalent metal cation as a cofactor.

The protein localises to the cytoplasm. The enzyme catalyses a ribonucleoside 5'-phosphate + H2O = a ribonucleoside + phosphate. In terms of biological role, nucleotidase that shows phosphatase activity on nucleoside 5'-monophosphates. This Pseudomonas putida (strain W619) protein is 5'-nucleotidase SurE.